Consider the following 339-residue polypeptide: Anthranilate phosphoribosyltransferase (339 aa).

5-phospho-alpha-D-ribose 1-diphosphate is bound by residues Gly-81, 84–85, Ser-89, 91–94, 109–117, and Ala-121; these read GD, NVSS, and KHGNRALSS. Residue Gly-81 coordinates anthranilate. Ser-93 contacts Mg(2+). Asn-112 contributes to the anthranilate binding site. Arg-167 provides a ligand contact to anthranilate. Residues Asp-225 and Glu-226 each contribute to the Mg(2+) site.

The protein belongs to the anthranilate phosphoribosyltransferase family. As to quaternary structure, homodimer. The cofactor is Mg(2+).

The enzyme catalyses N-(5-phospho-beta-D-ribosyl)anthranilate + diphosphate = 5-phospho-alpha-D-ribose 1-diphosphate + anthranilate. It participates in amino-acid biosynthesis; L-tryptophan biosynthesis; L-tryptophan from chorismate: step 2/5. Catalyzes the transfer of the phosphoribosyl group of 5-phosphorylribose-1-pyrophosphate (PRPP) to anthranilate to yield N-(5'-phosphoribosyl)-anthranilate (PRA). This is Anthranilate phosphoribosyltransferase from Brucella ovis (strain ATCC 25840 / 63/290 / NCTC 10512).